The sequence spans 328 residues: MKMPSAEVPTIDVSPLFGDDAQEKVRVGQEINKACRGSGFFYAANHGVDVQRLQDVVNEFHRTMSPQEKYDLAIHAYNKNNSHVRNGYYMAIEGKKAVESFCYLNPSFSEDHPEIKAGTPMHEVNSWPDEEKHPSFRPFCEEYYWTMHRLSKVLMRGFALALGKDERFFEPELKEADTLSSVSLIRYPYLEDYPPVKTGPDGEKLSFEDHFDVSMITVLYQTQVQNLQVETVDGWRDLPTSDTDFLVNAGTYLGHLTNDYFPSPLHRVKFVNAERLSLPFFFHAGQHTLIEPFFPDGAPEGKQGNEAVRYGDYLNHGLHSLIVKNGQT.

Residues R85, Y89, S181, and Y187 each coordinate isopenicillin N. R85, Y89, S181, Y187, H210, and D212 together coordinate N-[(5S)-5-amino-5-carboxypentanoyl]-L-cysteinyl-D-valine. The Fe2OG dioxygenase domain occupies T178–A284. Fe(2+) contacts are provided by H210, D212, and H266. R275 provides a ligand contact to 2-oxoglutarate. An isopenicillin N-binding site is contributed by S277. N-[(5S)-5-amino-5-carboxypentanoyl]-L-cysteinyl-D-valine is bound at residue S277.

It belongs to the iron/ascorbate-dependent oxidoreductase family. The cofactor is Fe cation. It depends on L-ascorbate as a cofactor.

The catalysed reaction is N-[(5S)-5-amino-5-carboxypentanoyl]-L-cysteinyl-D-valine + O2 = isopenicillin N + 2 H2O. It participates in antibiotic biosynthesis; penicillin G biosynthesis; penicillin G from L-alpha-aminoadipate and L-cysteine and L-valine: step 2/3. Its function is as follows. Removes, in the presence of oxygen, 4 hydrogen atoms from delta-L-(alpha-aminoadipyl)-L-cysteinyl-D-valine (ACV) to form the azetidinone and thiazolidine rings of isopenicillin. The polypeptide is Isopenicillin N synthase (pcbC) (Amycolatopsis lactamdurans (Nocardia lactamdurans)).